A 153-amino-acid chain; its full sequence is Large ribosomal subunit protein uL22 (153 aa).

This sequence belongs to the universal ribosomal protein uL22 family. In terms of assembly, part of the 50S ribosomal subunit.

Functionally, this protein binds specifically to 23S rRNA. It makes multiple contacts with different domains of the 23S rRNA in the assembled 50S subunit and ribosome. The globular domain of the protein is located near the polypeptide exit tunnel on the outside of the subunit, while an extended beta-hairpin is found that lines the wall of the exit tunnel in the center of the 70S ribosome. The polypeptide is Large ribosomal subunit protein uL22 (Methanocella arvoryzae (strain DSM 22066 / NBRC 105507 / MRE50)).